A 342-amino-acid chain; its full sequence is Nuclear hormone receptor family member nhr-150 (342 aa).

The nuclear receptor DNA-binding region spans 1–71 (MCQVCGAAEA…AGMTSKKIQS (71 aa)). The segment at 2 to 22 (CQVCGAAEADLHFGGISCRAC) adopts an NR C4-type zinc-finger fold. The segment at 39–54 (CTCKTRILDSHPCRSC) adopts an NR C4-type; degenerate zinc-finger fold. An NR LBD domain is found at 94-341 (SARIIPRSSL…GFMEIIRESK (248 aa)).

It belongs to the nuclear hormone receptor family.

It localises to the nucleus. Functionally, orphan nuclear receptor. The sequence is that of Nuclear hormone receptor family member nhr-150 (nhr-150) from Caenorhabditis elegans.